The sequence spans 350 residues: Protein-arginine kinase (350 aa).

Positions 21–253 constitute a Phosphagen kinase C-terminal domain; sequence IVISSRIRLA…VRLADQEREA (233 aa). Residues 24 to 28, His90, Arg124, 175 to 179, and 206 to 211 each bind ATP; these read SSRIR, RASTM, and RGLYGE. The RDXXRA motif of the pArg binding pocket involved in allosteric regulation motif lies at 336–341; that stretch reads RDVHRA.

The protein belongs to the ATP:guanido phosphotransferase family.

The catalysed reaction is L-arginyl-[protein] + ATP = N(omega)-phospho-L-arginyl-[protein] + ADP + H(+). Appears to be allosterically activated by the binding of pArg-containing polypeptides to the pArg-binding pocket localized in the C-terminal domain of McsB. Its function is as follows. Catalyzes the specific phosphorylation of arginine residues in proteins. This is Protein-arginine kinase from Moorella thermoacetica (strain ATCC 39073 / JCM 9320).